We begin with the raw amino-acid sequence, 230 residues long: MLRSCAMRLRTLGATPARRPEATRRLFSSEEVVCKDYALPNPSWTKDLRLLFDQFMKKCEDGSWKRLPSYRQNPPQALQEFQTHFVDSKFKKEEQMSKAQQFTRSLEEGLGFEYAMFYNKAEKRIVCLFQGGLHLQGMPGFVHGGAIATIIDITAGMCAFSEGIVMTANLNIDYKKPIPLLSVVVVNSQLQKIEGRKLFVSCTIQSTDEKTLHTQATALFIKLDPDKPLT.

A mitochondrion-targeting transit peptide spans 1-27 (MLRSCAMRLRTLGATPARRPEATRRLF). Phosphoserine occurs at positions 28 and 29. N6-succinyllysine occurs at positions 46 and 57. K65 bears the N6-acetyllysine mark. N6-succinyllysine is present on residues K89 and K98. D152 functions as the Proton donor/acceptor in the catalytic mechanism. Substrate contacts are provided by residues K175 and 196–197 (RK). K197 carries the N6-succinyllysine modification.

Belongs to the THEM4/THEM5 thioesterase family. In terms of assembly, homodimer and homotetramer. Interacts with AKT1 in the cytosol. Post-translationally, phosphorylated.

The protein resides in the cell membrane. The protein localises to the cell projection. Its subcellular location is the ruffle membrane. It is found in the cytoplasm. It localises to the mitochondrion. The protein resides in the mitochondrion inner membrane. The protein localises to the mitochondrion intermembrane space. It catalyses the reaction hexadecanoyl-CoA + H2O = hexadecanoate + CoA + H(+). It carries out the reaction octanoyl-CoA + H2O = octanoate + CoA + H(+). The catalysed reaction is decanoyl-CoA + H2O = decanoate + CoA + H(+). The enzyme catalyses dodecanoyl-CoA + H2O = dodecanoate + CoA + H(+). It catalyses the reaction tetradecanoyl-CoA + H2O = tetradecanoate + CoA + H(+). It carries out the reaction (9Z)-octadecenoyl-CoA + H2O = (9Z)-octadecenoate + CoA + H(+). The catalysed reaction is (5Z,8Z,11Z,14Z)-eicosatetraenoyl-CoA + H2O = (5Z,8Z,11Z,14Z)-eicosatetraenoate + CoA + H(+). Functionally, has acyl-CoA thioesterase activity towards medium and long-chain (C14 to C18) fatty acyl-CoA substrates, and probably plays a role in mitochondrial fatty acid metabolism. Plays a role in the apoptotic process, possibly via its regulation of AKT1 activity. The sequence is that of Acyl-coenzyme A thioesterase THEM4 (Them4) from Rattus norvegicus (Rat).